Consider the following 173-residue polypeptide: MFRIASRQTRNLRALSSSKNWARSLVNTRSFRAAASVQNNNAQIGEMVDKISSLSLLETSELVKQLKEKLNIAEIAPMAAVAPAVASAAPSEEKAPEEKKEEKTTWNLKLESFDAGSKAKVIKEVKSLLGLSLVDAKKFVESAPKVLKENILKEDAEAIKSKLEKLSCKVVLE.

A mitochondrion-targeting transit peptide spans 1-33 (MFRIASRQTRNLRALSSSKNWARSLVNTRSFRA).

This sequence belongs to the bacterial ribosomal protein bL12 family. In terms of assembly, component of the mitochondrial large ribosomal subunit (mt-LSU). Mature yeast 74S mitochondrial ribosomes consist of a small (37S) and a large (54S) subunit. The 37S small subunit contains a 15S ribosomal RNA (15S mt-rRNA) and at least 32 different proteins. The 54S large subunit contains a 21S rRNA (21S mt-rRNA) and at least 45 different proteins.

It is found in the mitochondrion. Its function is as follows. Component of the mitochondrial ribosome (mitoribosome), a dedicated translation machinery responsible for the synthesis of mitochondrial genome-encoded proteins, including at least some of the essential transmembrane subunits of the mitochondrial respiratory chain. The mitoribosomes are attached to the mitochondrial inner membrane and translation products are cotranslationally integrated into the membrane. The sequence is that of Large ribosomal subunit protein bL12m (mrpl12) from Schizosaccharomyces pombe (strain 972 / ATCC 24843) (Fission yeast).